A 632-amino-acid polypeptide reads, in one-letter code: Putative ferric transport system permease protein FbpB 1 (632 aa).

15 helical membrane passes run Ser5–Leu25, Leu37–Ser57, Met58–Ala78, Leu93–Val113, Leu144–Tyr164, Ile178–Met198, Gly223–Leu243, Tyr270–Ile290, Pro299–Gly319, Leu330–Gly350, Ile377–Tyr397, Ile436–Val456, Phe469–Ala489, Phe490–Met510, and Cys547–Val567. The region spanning Ile140–Gln345 is the ABC transmembrane type-1 1 domain. The ABC transmembrane type-1 2 domain maps to Leu431–Phe632.

It belongs to the binding-protein-dependent transport system permease family. FbpB subfamily. The complex is composed of two ATP-binding proteins (FbpC), two transmembrane proteins (FbpB) and a solute-binding protein (FbpA).

Its subcellular location is the cell inner membrane. Part of the ABC transporter complex FbpABC (TC 3.A.1.10.1) involved in Fe(3+) ions import. Probably responsible for the translocation of the substrate across the membrane. This chain is Putative ferric transport system permease protein FbpB 1 (fbpB1), found in Haemophilus influenzae (strain ATCC 51907 / DSM 11121 / KW20 / Rd).